Here is a 1077-residue protein sequence, read N- to C-terminus: MEEGPIKKKLKSAGQGSGKTDAFRNFEQFFFRLNTLYTFLICRKHVVPTFKTLCGPIETALKRTVTKEDLAMVMALMPRECVFKYIDENQIYTETKIFDFNNGGFQQKENDIFELKDVDDQNQTQKSTQLLIFEFIDGTMQRSWSASDRFSQIKIPTYTTEEMKKMISKREALFKSRLREFILEKEKANLDPFSELTNLAQKYIPRERDYEDPIEAMMKAKQESNEMSIPNYSNNSVITTIPQMIEKLKSTEFYASQIKHCFTIPSRTAKYKGLCFELAPEVYQGMEHENFYSHQADAINSLHQGENVIITTSTSSGKSLIYQLAAIDLLLKDPESTFMYIFPTKALAQDQKRAFKVILSKIPELKNAVVDTYDGDTEPEERAYIRKNARVIFTNPDMIHTSILPNHANWRHFLYHLKLVVVDELHIYKGLFGSHVALVMRRLLRLCHCFYENSGLQFISCSATLKSPVQHMKDMFGINEVTLIHEDGSPTGAKHLVVWNPPILPQHERKRENFIRESAKILVQLILNNVRTIAFCYVRRVCELLMKEVRNIFIETGREDLVTEVMSYRGGYSASDRRKIEREMFHGNLKAVISTNALELGIDIGGLDAVLMCGFPLSMANFHQQSGRAGRRNNDSLTLVVASDSPVDQHYVAHPESLLEVNNFESYQDLVLDFNNILILEGHIQCAAFELPINFERDKQYFTESHLRKICVERLHHNQDGYHASNRFLPWPSKCVSLRGGEEDQFAVVDITNGRNIIIEEIEASRTSFTLYDGGIFIHQGYPYLVKEFNPDERYAKVQRVDVDWVTNQRDFTDVDPQEIELIRSLRNSDVPVYFGKIKTTIIVFGFFKVDKYKRIIDAIETHNPPVIINSKGLWIDMPKYALEICQKKQLNVAGAIHGAQHAIMGMLPRFIVAGVDEIQTECKAPEKEFAERQTKRKRPARLIFYDSKGGKYGSGLCVKAFEHIDDIIESSLRRIEECPCSDGCPDCVAASFCKENSLVLSKPGAQVVLHCILGHSEDSFIDLIKDGPEPNMPEIKVETVIPVSEHVNFSDDFKIIDVRRATKDDTHTNEIIKKEI.

The Helicase ATP-binding domain occupies 299–483 (INSLHQGENV…DMFGINEVTL (185 aa)). Position 312–319 (312–319 (TSTSSGKS)) interacts with ATP. Residues 423 to 426 (DELH) carry the DEAH box motif. The region spanning 521–678 (ILVQLILNNV…DLVLDFNNIL (158 aa)) is the Helicase C-terminal domain.

It belongs to the helicase family. HRQ1 subfamily. Forms heptamer rings. Interacts with RAD4. It depends on Mg(2+) as a cofactor.

The protein localises to the nucleus. It catalyses the reaction Couples ATP hydrolysis with the unwinding of duplex DNA by translocating in the 3'-5' direction.. It carries out the reaction ATP + H2O = ADP + phosphate + H(+). Functionally, helicase with 3'-5' helicase activity involved in genome stability. Functions in the RAD4-dependent nucleotide excision repair (NER) pathway and plays a critical role in DNA interstrand cross-link repair. Unwinds relatively long duplex DNA up to 120-bp and requires a long 3'-tail of at least 70 nucleotides for efficient unwinding of duplex DNA. Activity is significantly stimulated by a preexisting fork structure. Shows both processive helicase and DNA strand annealing activities. Affects telomere length by a non-catalytic mechanism, probably through inhibiting telomerase by competing with it for ssDNA binding. This is ATP-dependent helicase HRQ1 from Saccharomyces cerevisiae (strain ATCC 204508 / S288c) (Baker's yeast).